Reading from the N-terminus, the 358-residue chain is Peptide chain release factor 1 (358 aa).

The residue at position 233 (Gln-233) is an N5-methylglutamine.

Belongs to the prokaryotic/mitochondrial release factor family. Methylated by PrmC. Methylation increases the termination efficiency of RF1.

The protein resides in the cytoplasm. Its function is as follows. Peptide chain release factor 1 directs the termination of translation in response to the peptide chain termination codons UAG and UAA. In Clostridium botulinum (strain 657 / Type Ba4), this protein is Peptide chain release factor 1.